The following is a 457-amino-acid chain: Glutamate--tRNA ligase 1 (457 aa).

The 'HIGH' region motif lies at 9-19 (PSPTGYIHIGN). The short motif at 250–254 (GLSKR) is the 'KMSKS' region element. An ATP-binding site is contributed by K253.

Belongs to the class-I aminoacyl-tRNA synthetase family. Glutamate--tRNA ligase type 1 subfamily. Monomer.

The protein localises to the cytoplasm. It catalyses the reaction tRNA(Glu) + L-glutamate + ATP = L-glutamyl-tRNA(Glu) + AMP + diphosphate. Its function is as follows. Catalyzes the attachment of glutamate to tRNA(Glu) in a two-step reaction: glutamate is first activated by ATP to form Glu-AMP and then transferred to the acceptor end of tRNA(Glu). The chain is Glutamate--tRNA ligase 1 from Brucella abortus (strain S19).